We begin with the raw amino-acid sequence, 392 residues long: Succinate--CoA ligase [ADP-forming] subunit beta (392 aa).

Residues 9–248 (KDILKKFGVS…TNEEDPFEVE (240 aa)) form the ATP-grasp domain. ATP is bound by residues Lys-50, 57–59 (GRG), Glu-103, Met-106, and Glu-111. The Mg(2+) site is built by Asn-203 and Asp-217. Substrate contacts are provided by residues Asn-268 and 325–327 (GIV).

The protein belongs to the succinate/malate CoA ligase beta subunit family. Heterotetramer of two alpha and two beta subunits. Mg(2+) is required as a cofactor.

It catalyses the reaction succinate + ATP + CoA = succinyl-CoA + ADP + phosphate. The enzyme catalyses GTP + succinate + CoA = succinyl-CoA + GDP + phosphate. The protein operates within carbohydrate metabolism; tricarboxylic acid cycle; succinate from succinyl-CoA (ligase route): step 1/1. In terms of biological role, succinyl-CoA synthetase functions in the citric acid cycle (TCA), coupling the hydrolysis of succinyl-CoA to the synthesis of either ATP or GTP and thus represents the only step of substrate-level phosphorylation in the TCA. The beta subunit provides nucleotide specificity of the enzyme and binds the substrate succinate, while the binding sites for coenzyme A and phosphate are found in the alpha subunit. This is Succinate--CoA ligase [ADP-forming] subunit beta from Chlorobium limicola (strain DSM 245 / NBRC 103803 / 6330).